The primary structure comprises 154 residues: MKIWIDADACPRVVKDIVFRASERLKVPVCLVANTDLSRAHTSLITSVRVKAGFDVADDYIAENAEACDLVITADIPLAARVVEKGGVALDPRGELYTEENVGERLSYRNLMAELRTDGLLVGGPAQLGLTDRNRFASALDRLLTKMVREHRSQ.

Belongs to the UPF0178 family.

In Citrifermentans bemidjiense (strain ATCC BAA-1014 / DSM 16622 / JCM 12645 / Bem) (Geobacter bemidjiensis), this protein is UPF0178 protein Gbem_2221.